The primary structure comprises 430 residues: Tyrosine--tRNA ligase (430 aa).

L-tyrosine is bound at residue Y36. Positions 41–50 (PTASSLHVGS) match the 'HIGH' region motif. 2 residues coordinate L-tyrosine: Y170 and Q174. The 'KMSKS' region signature appears at 230–234 (KMGKT). K233 is an ATP binding site. One can recognise an S4 RNA-binding domain in the interval 362 to 427 (VPAFELFDEI…GKKNYHRLVL (66 aa)).

The protein belongs to the class-I aminoacyl-tRNA synthetase family. TyrS type 1 subfamily. As to quaternary structure, homodimer.

The protein localises to the cytoplasm. The catalysed reaction is tRNA(Tyr) + L-tyrosine + ATP = L-tyrosyl-tRNA(Tyr) + AMP + diphosphate + H(+). Catalyzes the attachment of tyrosine to tRNA(Tyr) in a two-step reaction: tyrosine is first activated by ATP to form Tyr-AMP and then transferred to the acceptor end of tRNA(Tyr). In Desulfatibacillum aliphaticivorans, this protein is Tyrosine--tRNA ligase.